The sequence spans 328 residues: Malate dehydrogenase 2 (328 aa).

Position 12–18 (12–18) interacts with NAD(+); it reads GAAGQIA. Residues R93 and R99 each coordinate substrate. NAD(+)-binding positions include N106, Q113, and 130–132; that span reads VGN. Substrate-binding residues include N132 and R163. Catalysis depends on H188, which acts as the Proton acceptor.

This sequence belongs to the LDH/MDH superfamily. MDH type 2 family.

It catalyses the reaction (S)-malate + NAD(+) = oxaloacetate + NADH + H(+). Its function is as follows. Catalyzes the reversible oxidation of malate to oxaloacetate. In Burkholderia vietnamiensis (strain G4 / LMG 22486) (Burkholderia cepacia (strain R1808)), this protein is Malate dehydrogenase 2.